Here is a 165-residue protein sequence, read N- to C-terminus: Natriuretic peptide Na-NP (165 aa).

The signal sequence occupies residues 1–25; it reads MVGLSRLAGGGLLLVLALLPLALDG. The propeptide occupies 26–83; it reads KPAPEALHKPPTGLRTSLAALRILGYLRPDSKQSRAARDRMLHPEQQVGGGGDSRPLQ. Positions 56–68 are enriched in basic and acidic residues; that stretch reads SKQSRAARDRMLH. Disordered stretches follow at residues 56–100 and 135–165; these read SKQS…QKID and PDSK…SRVI. C94 and C110 form a disulfide bridge. The propeptide occupies 129–165; sequence ILEYLRPDSKRSRATRDRMLHPEQQVGGGGGGGSRVI. Residues 135–149 are compositionally biased toward basic and acidic residues; it reads PDSKRSRATRDRMLH. A compositionally biased stretch (gly residues) spans 154–165; the sequence is VGGGGGGGSRVI.

Belongs to the natriuretic peptide family. Expressed by the venom gland.

The protein resides in the secreted. Natriuretic peptide that dose-dependently induces the rapid relaxation of rat aortic strips phenylephrine-precontracted. Acts by stimulating cGMP production in a dose-dependent manner (by probably activating NPR1 and/or NPR2). May also show potent hypotensive effects. The chain is Natriuretic peptide Na-NP from Naja atra (Chinese cobra).